An 890-amino-acid polypeptide reads, in one-letter code: DNA mismatch repair protein MutS (890 aa).

607-614 (GPNMSGKS) contributes to the ATP binding site.

Belongs to the DNA mismatch repair MutS family.

Its function is as follows. This protein is involved in the repair of mismatches in DNA. It is possible that it carries out the mismatch recognition step. This protein has a weak ATPase activity. This chain is DNA mismatch repair protein MutS, found in Bacillus mycoides (strain KBAB4) (Bacillus weihenstephanensis).